Reading from the N-terminus, the 134-residue chain is Small ribosomal subunit protein bS16 (134 aa).

The segment at 115–134 (AKLRRRQAKKAAEAAGSAEG) is disordered.

This sequence belongs to the bacterial ribosomal protein bS16 family.

This chain is Small ribosomal subunit protein bS16, found in Chlorobaculum tepidum (strain ATCC 49652 / DSM 12025 / NBRC 103806 / TLS) (Chlorobium tepidum).